Here is a 484-residue protein sequence, read N- to C-terminus: Putative amidase AmiA2 (484 aa).

Residues Lys-93 and Ser-167 each act as charge relay system in the active site. Ser-191 (acyl-ester intermediate) is an active-site residue.

It belongs to the amidase family.

It catalyses the reaction a monocarboxylic acid amide + H2O = a monocarboxylate + NH4(+). In Mycobacterium bovis (strain ATCC BAA-935 / AF2122/97), this protein is Putative amidase AmiA2 (amiA2).